The primary structure comprises 288 residues: L-threonine kinase (288 aa).

80–90 (PIAKGMASSTA) contributes to the ATP binding site.

The protein belongs to the GHMP kinase family. PduX subfamily.

The protein resides in the cytoplasm. It carries out the reaction L-threonine + ATP = O-phospho-L-threonine + ADP + H(+). The protein operates within cofactor biosynthesis; adenosylcobalamin biosynthesis. Its pathway is polyol metabolism; 1,2-propanediol degradation. Functionally, L-threonine kinase that catalyzes the conversion of L-threonine to L-threonine-O-3-phosphate. Involved in the de novo synthesis of adenosylcobalamin (coenzyme B12) and the assimilation of cobyric acid. Its function is as follows. Expression of a cosmid containing the full 21-gene pdu operon in E.coli allows E.coli to grow on 1,2-propanediol (1,2-PD) with the appearance of bacterial microcompartments (BMC) in its cytoplasm. In terms of biological role, the 1,2-PD-specific bacterial microcompartment (BMC) concentrates low levels of 1,2-PD catabolic enzymes, concentrates volatile reaction intermediates thus enhancing pathway flux and keeps the level of toxic, mutagenic propionaldehyde low. This gene probably benefits from its induction via the Pdu promoter, rather than a physical interaction with the BMC. In Citrobacter freundii, this protein is L-threonine kinase.